The sequence spans 375 residues: Probable aminomethyltransferase (375 aa).

It belongs to the GcvT family. The glycine cleavage system is composed of four proteins: P, T, L and H.

It carries out the reaction N(6)-[(R)-S(8)-aminomethyldihydrolipoyl]-L-lysyl-[protein] + (6S)-5,6,7,8-tetrahydrofolate = N(6)-[(R)-dihydrolipoyl]-L-lysyl-[protein] + (6R)-5,10-methylene-5,6,7,8-tetrahydrofolate + NH4(+). Functionally, the glycine cleavage system catalyzes the degradation of glycine. This is Probable aminomethyltransferase from Aeropyrum pernix (strain ATCC 700893 / DSM 11879 / JCM 9820 / NBRC 100138 / K1).